The sequence spans 51 residues: Large ribosomal subunit protein bL33 (51 aa).

Residues methionine 1–arginine 24 form a disordered region.

Belongs to the bacterial ribosomal protein bL33 family.

The chain is Large ribosomal subunit protein bL33 from Cellvibrio japonicus (strain Ueda107) (Pseudomonas fluorescens subsp. cellulosa).